Here is an 88-residue protein sequence, read N- to C-terminus: UPF0297 protein Ccel_2240 (88 aa).

Belongs to the UPF0297 family.

The chain is UPF0297 protein Ccel_2240 from Ruminiclostridium cellulolyticum (strain ATCC 35319 / DSM 5812 / JCM 6584 / H10) (Clostridium cellulolyticum).